Reading from the N-terminus, the 487-residue chain is Glutamyl-tRNA(Gln) amidotransferase subunit A (487 aa).

Active-site charge relay system residues include lysine 79 and serine 154. Residue serine 178 is the Acyl-ester intermediate of the active site.

Belongs to the amidase family. GatA subfamily. Heterotrimer of A, B and C subunits.

The enzyme catalyses L-glutamyl-tRNA(Gln) + L-glutamine + ATP + H2O = L-glutaminyl-tRNA(Gln) + L-glutamate + ADP + phosphate + H(+). Functionally, allows the formation of correctly charged Gln-tRNA(Gln) through the transamidation of misacylated Glu-tRNA(Gln) in organisms which lack glutaminyl-tRNA synthetase. The reaction takes place in the presence of glutamine and ATP through an activated gamma-phospho-Glu-tRNA(Gln). The protein is Glutamyl-tRNA(Gln) amidotransferase subunit A of Heliobacterium modesticaldum (strain ATCC 51547 / Ice1).